A 340-amino-acid chain; its full sequence is MLLIDLAGYELTQEEQELLEHPLVSGLILFTRNFHDKAQLQALIKSVRQRVKKPLLITVDQEGGRVQRFREGFTKLPAMQSFLQLDRLQLAQEAGWLMSAEMFALDIDLSFAPVLDLGHCSKAIGDRSFGEDVATMLPVAEAFIDGMREIGMAATGKHFPGHGHVIADSHLETPFDDRPKETIFNHDIQPFKQLIAKGKLSAIMPAHVIYTQCDSQPASGSSYWLKEILRKQLQFNGVIFSDDLGMKGAGFMGNYVERSEKALQAGCDLLLLCNEPDGVVQVLDNLKYQPTPTQKERYLSLMKRKQISWSELTASPRWQQAHQQLATLQDQWLEWKAQNA.

Substrate is bound by residues Asp-60, Arg-68, Arg-127, and 157-158 (KH). Residue His-170 is the Proton donor/acceptor of the active site. The Nucleophile role is filled by Asp-242.

The protein belongs to the glycosyl hydrolase 3 family. NagZ subfamily.

The protein localises to the cytoplasm. The catalysed reaction is Hydrolysis of terminal non-reducing N-acetyl-D-hexosamine residues in N-acetyl-beta-D-hexosaminides.. It functions in the pathway cell wall biogenesis; peptidoglycan recycling. Plays a role in peptidoglycan recycling by cleaving the terminal beta-1,4-linked N-acetylglucosamine (GlcNAc) from peptide-linked peptidoglycan fragments, giving rise to free GlcNAc, anhydro-N-acetylmuramic acid and anhydro-N-acetylmuramic acid-linked peptides. The sequence is that of Beta-hexosaminidase from Glaesserella parasuis serovar 5 (strain SH0165) (Haemophilus parasuis).